A 71-amino-acid polypeptide reads, in one-letter code: Movement protein TGBp3 (71 aa).

Residues 1-3 lie on the Lumenal side of the membrane; it reads MEA. The chain crosses the membrane as a helical span at residues 4 to 26; sequence GAYLNAIIFVLVATIIAVISVGL. Topologically, residues 27–71 are cytoplasmic; sequence TQTEPCTIRITGESITVHACHLDSETIKALATLKPLSLERLSFHQ.

This sequence belongs to the Tymovirales TGBp3 protein family.

The protein resides in the host endoplasmic reticulum membrane. Its function is as follows. Plays a role in viral cell-to-cell propagation, by facilitating genome transport to neighboring plant cells through plasmosdesmata. May induce the formation of granular vesicles derived from the Endoplasmic reticulum, which align on actin filaments. This Brassica campestris (Field mustard) protein is Movement protein TGBp3.